The primary structure comprises 291 residues: Beta-lactamase CTX-M-97 (291 aa).

The first 28 residues, 1-28 (MMTQSIGRSMLTVMATLPLLFSSATLHA), serve as a signal peptide directing secretion. The active-site Acyl-ester intermediate is the Ser-73. 237–239 (KTG) contacts substrate.

This sequence belongs to the class-A beta-lactamase family.

It catalyses the reaction a beta-lactam + H2O = a substituted beta-amino acid. Is probably capable of hydrolyzing cephalosporins such as ceftriaxone and ceftazidime, thus conferring resistance to these antibiotics. The protein is Beta-lactamase CTX-M-97 (bla) of Escherichia coli.